We begin with the raw amino-acid sequence, 87 residues long: DNA-directed RNA polymerase subunit omega (87 aa).

This sequence belongs to the RNA polymerase subunit omega family. As to quaternary structure, the RNAP catalytic core consists of 2 alpha, 1 beta, 1 beta' and 1 omega subunit. When a sigma factor is associated with the core the holoenzyme is formed, which can initiate transcription.

The catalysed reaction is RNA(n) + a ribonucleoside 5'-triphosphate = RNA(n+1) + diphosphate. Promotes RNA polymerase assembly. Latches the N- and C-terminal regions of the beta' subunit thereby facilitating its interaction with the beta and alpha subunits. This is DNA-directed RNA polymerase subunit omega from Pseudomonas putida (strain ATCC 700007 / DSM 6899 / JCM 31910 / BCRC 17059 / LMG 24140 / F1).